The primary structure comprises 238 residues: Pyridoxine 5'-phosphate synthase (238 aa).

Residues Asn7 and Arg18 each contribute to the 3-amino-2-oxopropyl phosphate site. His43 serves as the catalytic Proton acceptor. Arg45 and His50 together coordinate 1-deoxy-D-xylulose 5-phosphate. Catalysis depends on Glu70, which acts as the Proton acceptor. Thr100 serves as a coordination point for 1-deoxy-D-xylulose 5-phosphate. Residue His190 is the Proton donor of the active site. Residues Asp191 and 213–214 (GH) each bind 3-amino-2-oxopropyl phosphate.

Belongs to the PNP synthase family. Homooctamer; tetramer of dimers.

It localises to the cytoplasm. The catalysed reaction is 3-amino-2-oxopropyl phosphate + 1-deoxy-D-xylulose 5-phosphate = pyridoxine 5'-phosphate + phosphate + 2 H2O + H(+). Its pathway is cofactor biosynthesis; pyridoxine 5'-phosphate biosynthesis; pyridoxine 5'-phosphate from D-erythrose 4-phosphate: step 5/5. Functionally, catalyzes the complicated ring closure reaction between the two acyclic compounds 1-deoxy-D-xylulose-5-phosphate (DXP) and 3-amino-2-oxopropyl phosphate (1-amino-acetone-3-phosphate or AAP) to form pyridoxine 5'-phosphate (PNP) and inorganic phosphate. This Phocaeicola vulgatus (strain ATCC 8482 / DSM 1447 / JCM 5826 / CCUG 4940 / NBRC 14291 / NCTC 11154) (Bacteroides vulgatus) protein is Pyridoxine 5'-phosphate synthase.